The following is a 368-amino-acid chain: Probable endopolygalacturonase A (368 aa).

Positions methionine 1 to alanine 18 are cleaved as a signal peptide. Residues alanine 19–arginine 31 constitute a propeptide that is removed on maturation. The cysteines at positions 35 and 50 are disulfide-linked. 7 PbH1 repeats span residues leucine 140–alanine 162, leucine 167–glutamate 192, serine 193–serine 214, glycine 215–serine 235, valine 244–threonine 265, valine 273–glutamine 295, and threonine 307–glycine 352. Aspartate 207 functions as the Proton donor in the catalytic mechanism. Cysteine 209 and cysteine 225 are disulfide-bonded. Residue histidine 229 is part of the active site. An N-linked (GlcNAc...) asparagine glycan is attached at asparagine 246. Intrachain disulfides connect cysteine 335/cysteine 340 and cysteine 359/cysteine 368.

This sequence belongs to the glycosyl hydrolase 28 family.

It is found in the secreted. It catalyses the reaction (1,4-alpha-D-galacturonosyl)n+m + H2O = (1,4-alpha-D-galacturonosyl)n + (1,4-alpha-D-galacturonosyl)m.. Its function is as follows. Involved in maceration and soft-rotting of plant tissue. Hydrolyzes the 1,4-alpha glycosidic bonds of de-esterified pectate in the smooth region of the plant cell wall. In Aspergillus fumigatus (strain CBS 144.89 / FGSC A1163 / CEA10) (Neosartorya fumigata), this protein is Probable endopolygalacturonase A (pgaA).